The chain runs to 489 residues: Rhamnulokinase (489 aa).

Residue 13 to 17 (ASSGR) participates in ATP binding. The cysteines at positions 68 and 222 are disulfide-linked. Residues glycine 83 and 236–238 (HDT) contribute to the substrate site. Aspartate 237 acts as the Proton acceptor in catalysis. Threonine 259 lines the ATP pocket. Asparagine 296 lines the substrate pocket. Residue glutamine 304 participates in ATP binding. Residues cysteine 353 and cysteine 370 are joined by a disulfide bond. Glycine 402 contributes to the ATP binding site. Cysteine 413 and cysteine 417 are oxidised to a cystine.

The protein belongs to the rhamnulokinase family. Monomer. The cofactor is Mg(2+).

The enzyme catalyses L-rhamnulose + ATP = L-rhamnulose 1-phosphate + ADP + H(+). Its pathway is carbohydrate degradation; L-rhamnose degradation; glycerone phosphate from L-rhamnose: step 2/3. In terms of biological role, involved in the catabolism of L-rhamnose (6-deoxy-L-mannose). Catalyzes the transfer of the gamma-phosphate group from ATP to the 1-hydroxyl group of L-rhamnulose to yield L-rhamnulose 1-phosphate. The chain is Rhamnulokinase from Escherichia coli O1:K1 / APEC.